The chain runs to 482 residues: Glutamate--tRNA ligase (482 aa).

Positions 10–20 match the 'HIGH' region motif; sequence PSPTGFLHIGN. Residues 253–257 carry the 'KMSKS' region motif; the sequence is KLSKR. Lys-256 is an ATP binding site.

This sequence belongs to the class-I aminoacyl-tRNA synthetase family. Glutamate--tRNA ligase type 1 subfamily. Monomer.

It localises to the cytoplasm. It carries out the reaction tRNA(Glu) + L-glutamate + ATP = L-glutamyl-tRNA(Glu) + AMP + diphosphate. In terms of biological role, catalyzes the attachment of glutamate to tRNA(Glu) in a two-step reaction: glutamate is first activated by ATP to form Glu-AMP and then transferred to the acceptor end of tRNA(Glu). The sequence is that of Glutamate--tRNA ligase from Mesoplasma florum (strain ATCC 33453 / NBRC 100688 / NCTC 11704 / L1) (Acholeplasma florum).